The sequence spans 1029 residues: Chitin synthase 2 (1029 aa).

3 disordered regions span residues 1–160, 174–216, and 234–257; these read MDRP…GARS, SDVD…SHLR, and AHYG…QKSR. The segment covering 61 to 77 has biased composition (low complexity); that stretch reads PSVSSIHSRPSSISNIP. Over residues 244-257 the composition is skewed to basic and acidic residues; it reads DQQRRGVREPQKSR. N-linked (GlcNAc...) asparagine glycosylation is present at asparagine 348. 8 helical membrane-spanning segments follow: residues 639 to 659, 681 to 701, 716 to 736, 752 to 772, 791 to 811, 820 to 840, 918 to 938, and 952 to 972; these read WLNG…QLWA, VLFT…VAGG, LYIF…QFIL, SMVI…YIVI, NLIV…FIYL, SIQY…YAFC, YMVV…SEIY, and ILWS…TFAI.

The protein belongs to the chitin synthase family. Class II subfamily.

The protein resides in the cell membrane. The enzyme catalyses [(1-&gt;4)-N-acetyl-beta-D-glucosaminyl](n) + UDP-N-acetyl-alpha-D-glucosamine = [(1-&gt;4)-N-acetyl-beta-D-glucosaminyl](n+1) + UDP + H(+). Its function is as follows. Polymerizes chitin, a structural polymer of the cell wall and septum, by transferring the sugar moiety of UDP-GlcNAc to the non-reducing end of the growing chitin polymer. Plays an important role in cell wall integrity and has distinct functions in invasive hyphae and vegetative hyphae, but is not involved in plant infection. The sequence is that of Chitin synthase 2 from Pyricularia oryzae (strain 70-15 / ATCC MYA-4617 / FGSC 8958) (Rice blast fungus).